The chain runs to 536 residues: Arylsulfatase K (536 aa).

The N-terminal stretch at 1–24 (MIQKCIALSLFLFSALPEDNIVRA) is a signal peptide. 2 residues coordinate Ca(2+): aspartate 42 and cysteine 82. Residue cysteine 82 is the Nucleophile of the active site. A 3-oxoalanine (Cys) modification is found at cysteine 82. Lysine 130 contributes to the substrate binding site. An N-linked (GlcNAc...) asparagine glycan is attached at asparagine 195. Substrate is bound at residue histidine 253. N-linked (GlcNAc...) asparagine glycosylation occurs at asparagine 264. Ca(2+) is bound by residues aspartate 315 and histidine 316. N-linked (GlcNAc...) asparagine glycans are attached at residues asparagine 377, asparagine 416, and asparagine 501.

Belongs to the sulfatase family. It depends on Ca(2+) as a cofactor. In terms of processing, the conversion to 3-oxoalanine (also known as C-formylglycine, FGly), of a serine or cysteine residue in prokaryotes and of a cysteine residue in eukaryotes, is critical for catalytic activity.

It is found in the secreted. The protein localises to the lysosome. The catalysed reaction is an aryl sulfate + H2O = a phenol + sulfate + H(+). The enzyme catalyses Hydrolysis of the 2-sulfate groups of the 2-O-sulfo-D-glucuronate residues of chondroitin sulfate, heparin and heparitin sulfate.. Functionally, catalyzes the hydrolysis of pseudosubstrates such as p-nitrocatechol sulfate and p-nitrophenyl sulfate. Catalyzes the hydrolysis of the 2-sulfate groups of the 2-O-sulfo-D-glucuronate residues of chondroitin sulfate, heparin and heparitin sulfate. Acts selectively on 2-sulfoglucuronate and lacks activity against 2-sulfoiduronate. This Xenopus laevis (African clawed frog) protein is Arylsulfatase K (arsk).